A 193-amino-acid chain; its full sequence is dCTP deaminase (193 aa).

Residues 110-115, Asp-128, 136-138, Tyr-171, Lys-178, and Gln-182 contribute to the dCTP site; these read RSSLAR and VLE. Glu-138 (proton donor/acceptor) is an active-site residue. Positions 168-193 are disordered; it reads DRPYNRRQDAKYKNQQGAVSSRIDED. Residues 170–179 are compositionally biased toward basic and acidic residues; sequence PYNRRQDAKY.

This sequence belongs to the dCTP deaminase family. In terms of assembly, homotrimer.

The enzyme catalyses dCTP + H2O + H(+) = dUTP + NH4(+). It participates in pyrimidine metabolism; dUMP biosynthesis; dUMP from dCTP (dUTP route): step 1/2. Its function is as follows. Catalyzes the deamination of dCTP to dUTP. The chain is dCTP deaminase from Photorhabdus laumondii subsp. laumondii (strain DSM 15139 / CIP 105565 / TT01) (Photorhabdus luminescens subsp. laumondii).